The following is a 401-amino-acid chain: Diphosphomevalonate decarboxylase (401 aa).

At Ala-2 the chain carries N-acetylalanine. Residues 24-27 (YWGK), Arg-79, 157-162 (SGSACR), and Thr-213 contribute to the (R)-5-diphosphomevalonate site. A disordered region spans residues 382–401 (VLDDPHHHLLGPDGLPQRDL).

It belongs to the diphosphomevalonate decarboxylase family. In terms of assembly, homodimer.

The protein localises to the cytoplasm. It carries out the reaction (R)-5-diphosphomevalonate + ATP = isopentenyl diphosphate + ADP + phosphate + CO2. The protein operates within steroid biosynthesis; cholesterol biosynthesis. Its function is as follows. Catalyzes the ATP dependent decarboxylation of (R)-5-diphosphomevalonate to form isopentenyl diphosphate (IPP). Functions in the mevalonate (MVA) pathway leading to isopentenyl diphosphate (IPP), a key precursor for the biosynthesis of isoprenoids and sterol synthesis. This is Diphosphomevalonate decarboxylase (Mvd) from Rattus norvegicus (Rat).